A 266-amino-acid polypeptide reads, in one-letter code: Transmembrane domain-containing protein TMIGD3 (266 aa).

Residues 1–20 are disordered; it reads MEGSPAGPIEQKEARWESSW. A helical transmembrane segment spans residues 55–75; it reads FLPVMWLFILLSLALISDAMV. N-linked (GlcNAc...) asparagine glycosylation occurs at N192. A helical membrane pass occupies residues 213–233; the sequence is ILIICILITGLGIISVISHLT.

As to expression, expressed in the lung and bone. Expressed at lower levels in osteosarcoma tissues (at protein level).

Its subcellular location is the membrane. Its function is as follows. Plays a suppressive role in osteosarcoma malignancy by inhibiting NF-kappa-B activity. In Homo sapiens (Human), this protein is Transmembrane domain-containing protein TMIGD3.